Here is a 201-residue protein sequence, read N- to C-terminus: Recombination protein RecR (201 aa).

Residues 57–72 form a C4-type zinc finger; sequence CADCRTFTEQEVCNIC. The Toprim domain maps to 81–176; it reads GQICVVESPA…EASRIAHGVP (96 aa).

It belongs to the RecR family.

Its function is as follows. May play a role in DNA repair. It seems to be involved in an RecBC-independent recombinational process of DNA repair. It may act with RecF and RecO. The chain is Recombination protein RecR from Shigella boydii serotype 18 (strain CDC 3083-94 / BS512).